A 221-amino-acid chain; its full sequence is Protein-L-isoaspartate O-methyltransferase (221 aa).

The active site involves Ser-64.

The protein belongs to the methyltransferase superfamily. L-isoaspartyl/D-aspartyl protein methyltransferase family.

It is found in the cytoplasm. It carries out the reaction [protein]-L-isoaspartate + S-adenosyl-L-methionine = [protein]-L-isoaspartate alpha-methyl ester + S-adenosyl-L-homocysteine. Functionally, catalyzes the methyl esterification of L-isoaspartyl residues in peptides and proteins that result from spontaneous decomposition of normal L-aspartyl and L-asparaginyl residues. It plays a role in the repair and/or degradation of damaged proteins. This chain is Protein-L-isoaspartate O-methyltransferase, found in Thermococcus sibiricus (strain DSM 12597 / MM 739).